A 197-amino-acid chain; its full sequence is Probable molybdenum cofactor guanylyltransferase (197 aa).

GTP is bound by residues 10 to 12 (LCG), K22, D73, and D102. D102 is a Mg(2+) binding site.

The protein belongs to the MobA family. Mg(2+) serves as cofactor.

It localises to the cytoplasm. It catalyses the reaction Mo-molybdopterin + GTP + H(+) = Mo-molybdopterin guanine dinucleotide + diphosphate. In terms of biological role, transfers a GMP moiety from GTP to Mo-molybdopterin (Mo-MPT) cofactor (Moco or molybdenum cofactor) to form Mo-molybdopterin guanine dinucleotide (Mo-MGD) cofactor. In Methanothermobacter thermautotrophicus (strain ATCC 29096 / DSM 1053 / JCM 10044 / NBRC 100330 / Delta H) (Methanobacterium thermoautotrophicum), this protein is Probable molybdenum cofactor guanylyltransferase.